The sequence spans 159 residues: Ribosomal RNA large subunit methyltransferase H (159 aa).

S-adenosyl-L-methionine-binding positions include leucine 76, glycine 108, and 127-132; that span reads FSKMTF.

The protein belongs to the RNA methyltransferase RlmH family. As to quaternary structure, homodimer.

The protein localises to the cytoplasm. It carries out the reaction pseudouridine(1915) in 23S rRNA + S-adenosyl-L-methionine = N(3)-methylpseudouridine(1915) in 23S rRNA + S-adenosyl-L-homocysteine + H(+). Specifically methylates the pseudouridine at position 1915 (m3Psi1915) in 23S rRNA. In Geobacillus sp. (strain WCH70), this protein is Ribosomal RNA large subunit methyltransferase H.